A 545-amino-acid polypeptide reads, in one-letter code: Triacylglycerol lipase ptl1 (545 aa).

The PNPLA domain maps to 182–358 (LYFNGGTAFG…EVCTPKNFIW (177 aa)). Residues 213 to 217 (GCASG) carry the GXSXG motif.

The protein resides in the lipid droplet. It catalyses the reaction a triacylglycerol + H2O = a diacylglycerol + a fatty acid + H(+). Its function is as follows. Lipid particle-localized triacylglycerol (TAG) lipase. The lipid droplet/particle is a lipid storage compartment which serves as a depot of energy and building blocks for membrane lipid biosynthesis. Involved in the mobilization of the non-polar storage lipids triacylglycerols (TAGs) from lipid particles by hydrolysis of TAGs, releasing and supplying specific fatty acids to the appropriate metabolic pathways. This is Triacylglycerol lipase ptl1 (ptl1) from Schizosaccharomyces pombe (strain 972 / ATCC 24843) (Fission yeast).